We begin with the raw amino-acid sequence, 95 residues long: L-amino-acid oxidase (95 aa).

This sequence belongs to the flavin monoamine oxidase family. FIG1 subfamily. In terms of assembly, homodimer; non-covalently linked. It depends on FAD as a cofactor. In terms of processing, N-glycosylated. As to expression, expressed by the venom gland.

It localises to the secreted. It catalyses the reaction an L-alpha-amino acid + O2 + H2O = a 2-oxocarboxylate + H2O2 + NH4(+). It carries out the reaction L-leucine + O2 + H2O = 4-methyl-2-oxopentanoate + H2O2 + NH4(+). The enzyme catalyses L-phenylalanine + O2 + H2O = 3-phenylpyruvate + H2O2 + NH4(+). The catalysed reaction is L-tryptophan + O2 + H2O = indole-3-pyruvate + H2O2 + NH4(+). It catalyses the reaction L-methionine + O2 + H2O = 4-methylsulfanyl-2-oxobutanoate + H2O2 + NH4(+). It carries out the reaction L-arginine + O2 + H2O = 5-guanidino-2-oxopentanoate + H2O2 + NH4(+). Functionally, catalyzes an oxidative deamination of predominantly hydrophobic and aromatic L-amino acids, thus producing hydrogen peroxide that may contribute to the diverse toxic effects of this enzyme. Is highly active on L-Met, L-Leu, L-Phe, L-Trp, and L-Arg, and no weakly or no active on L-His, L-Tyr, L-Ile, L-Gln, and L-Lys. Exhibits diverse biological activities, such as antibacterial activity against both Gram-positive (B.subtilis) and Gram-negative (E.coli) bacteria, and inhibition of ADP- or collagen-induced platelet aggregation. Effects of snake L-amino oxidases on platelets are controversial, since they either induce aggregation or inhibit agonist-induced aggregation. These different effects are probably due to different experimental conditions. This protein may also induce hemorrhage, hemolysis, edema, apoptosis, and have antiparasitic activities. The protein is L-amino-acid oxidase of Naja oxiana (Central Asian cobra).